A 187-amino-acid polypeptide reads, in one-letter code: Protein GrpE (187 aa).

Residues Met1–Asn30 form a disordered region.

It belongs to the GrpE family. In terms of assembly, homodimer.

It is found in the cytoplasm. Functionally, participates actively in the response to hyperosmotic and heat shock by preventing the aggregation of stress-denatured proteins, in association with DnaK and GrpE. It is the nucleotide exchange factor for DnaK and may function as a thermosensor. Unfolded proteins bind initially to DnaJ; upon interaction with the DnaJ-bound protein, DnaK hydrolyzes its bound ATP, resulting in the formation of a stable complex. GrpE releases ADP from DnaK; ATP binding to DnaK triggers the release of the substrate protein, thus completing the reaction cycle. Several rounds of ATP-dependent interactions between DnaJ, DnaK and GrpE are required for fully efficient folding. This Borreliella afzelii (strain PKo) (Borrelia afzelii) protein is Protein GrpE.